Here is a 149-residue protein sequence, read N- to C-terminus: Interleukin-2 (149 aa).

Residues 1-20 (MYRMQLLSCIALTLAVLANS) form the signal peptide. Residue threonine 23 is glycosylated (O-linked (GalNAc...) threonine). A disulfide bond links cysteine 78 and cysteine 121. An N-linked (GlcNAc...) asparagine glycan is attached at asparagine 106.

The protein belongs to the IL-2 family.

Its subcellular location is the secreted. Its function is as follows. Cytokine produced by activated CD4-positive helper T-cells and to a lesser extend activated CD8-positive T-cells and natural killer (NK) cells that plays pivotal roles in the immune response and tolerance. Binds to a receptor complex composed of either the high-affinity trimeric IL-2R (IL2RA/CD25, IL2RB/CD122 and IL2RG/CD132) or the low-affinity dimeric IL-2R (IL2RB and IL2RG). Interaction with the receptor leads to oligomerization and conformation changes in the IL-2R subunits resulting in downstream signaling starting with phosphorylation of JAK1 and JAK3. In turn, JAK1 and JAK3 phosphorylate the receptor to form a docking site leading to the phosphorylation of several substrates including STAT5. This process leads to activation of several pathways including STAT, phosphoinositide-3-kinase/PI3K and mitogen-activated protein kinase/MAPK pathways. Functions as a T-cell growth factor and can increase NK-cell cytolytic activity as well. Promotes strong proliferation of activated B-cells and subsequently immunoglobulin production. Plays a pivotal role in regulating the adaptive immune system by controlling the survival and proliferation of regulatory T-cells, which are required for the maintenance of immune tolerance. Moreover, participates in the differentiation and homeostasis of effector T-cell subsets, including Th1, Th2, Th17 as well as memory CD8-positive T-cells. The chain is Interleukin-2 (IL2) from Equus caballus (Horse).